The following is a 281-amino-acid chain: Bifunctional N-acyl-homoserine lactone acylase/prephenate dehydratase (281 aa).

One can recognise a Prephenate dehydratase domain in the interval 6 to 181 (IIAFQGRPGA…NTTRFYIASR (176 aa)). The ACT domain maps to 196–273 (TLLFRVNNQP…EQQEILGVYP (78 aa)). Residues Ala207, Leu208, Asn221, and Met222 each coordinate L-phenylalanine.

In terms of assembly, homodimer.

The enzyme catalyses an N-acyl-L-homoserine lactone + H2O = L-homoserine lactone + a carboxylate. It carries out the reaction prephenate + H(+) = 3-phenylpyruvate + CO2 + H2O. It participates in amino-acid biosynthesis; L-phenylalanine biosynthesis; phenylpyruvate from prephenate: step 1/1. Multifunctional enzyme that acts on N-acyl-homoserine lactones (AHLs), beta-lactam antibiotics and shows prephenate dehydratase activity. Acts as an acylase on AHL and hydrolyzes the amide bond of the acyl side-chain of AHL molecules, releasing homoserine lactone (HSL) and the fatty acid. Can use different 3-oxo-acyl homoserine lactones, such as 3-oxo-decanoyl homoserine lactone, which is the preferred substrate, 3-oxo-octanoyl homoserine lactone, 3-oxo-hexanoyl homoserine lactone and 3-oxo-dodecanoyl homoserine lactone. It can also degrade various beta-lactam antibiotics, including penicillin G, amoxicillin and ampicillin, but not cefotaxime. In addition, it can complement a phenylalanine auxotrophic E.coli mutant, which carries a kanamycin gene inserted into pheA, suggesting that GqqA can also function as a prephenate dehydratase. Involved in bacterial quorum quenching (QQ) and cellulose biofilm formation. This is Bifunctional N-acyl-homoserine lactone acylase/prephenate dehydratase from Komagataeibacter europaeus (Gluconacetobacter europaeus).